The following is a 76-amino-acid chain: DNA-directed RNA polymerase subunit epsilon (76 aa).

Belongs to the RNA polymerase subunit epsilon family. In terms of assembly, RNAP is composed of a core of 2 alpha, a beta and a beta' subunit. The core is associated with a delta subunit, and at least one of epsilon or omega. When a sigma factor is associated with the core the holoenzyme is formed, which can initiate transcription.

It carries out the reaction RNA(n) + a ribonucleoside 5'-triphosphate = RNA(n+1) + diphosphate. Its function is as follows. A non-essential component of RNA polymerase (RNAP). The sequence is that of DNA-directed RNA polymerase subunit epsilon from Streptococcus equi subsp. zooepidemicus (strain H70).